The primary structure comprises 115 residues: Somatostatin-2 (115 aa).

The first 18 residues, 1–18 (MKVCRIHCALALLGLALA), serve as a signal peptide directing secretion. The propeptide occupies 19 to 87 (ICSQGAASQP…KEDLRVELER (69 aa)). Cys104 and Cys115 are joined by a disulfide.

The protein belongs to the somatostatin family.

It localises to the secreted. Somatostatin inhibits the release of somatotropin. The chain is Somatostatin-2 (sst2) from Oncorhynchus mykiss (Rainbow trout).